The sequence spans 339 residues: Scoulerine-9-O-methyltransferase 3 (339 aa).

Position 161 (Met161) interacts with S-adenosyl-L-methionine. Asp164 serves as a coordination point for substrate. S-adenosyl-L-methionine contacts are provided by residues Thr165, Gly191, Asp214, 228–229 (DV), and Lys242. 243-247 (SILHE) is a binding site for substrate. The active-site Proton acceptor is the His246.

Belongs to the class I-like SAM-binding methyltransferase superfamily. Cation-independent O-methyltransferase family. COMT subfamily. In terms of assembly, homodimer. Forms heterodimer with SOMT2. The heterodimer SOMT2-SOMT3 possesses 3-O-acetyl-4'-O-demethylpapaveroxine 4'-O-methyltransferase activity, where SOMT2 is the catalytic subunit. Highly expressed in capsules. Expressed is stems. Expressed at low levels in roots.

The enzyme catalyses (S)-scoulerine + S-adenosyl-L-methionine = (S)-tetrahydrocolumbamine + S-adenosyl-L-homocysteine + H(+). It functions in the pathway alkaloid biosynthesis. In terms of biological role, methyltransferase involved in the biosynthesis of the benzylisoquinoline alkaloid noscapine. Catalyzes the conversion of (S)-scoulerine to (S)-tetrahydrocolumbamine. The polypeptide is Scoulerine-9-O-methyltransferase 3 (Papaver somniferum (Opium poppy)).